The sequence spans 179 residues: Large ribosomal subunit protein uL5 (179 aa).

This sequence belongs to the universal ribosomal protein uL5 family. Part of the 50S ribosomal subunit; part of the 5S rRNA/L5/L18/L25 subcomplex. Contacts the 5S rRNA and the P site tRNA. Forms a bridge to the 30S subunit in the 70S ribosome.

Its function is as follows. This is one of the proteins that bind and probably mediate the attachment of the 5S RNA into the large ribosomal subunit, where it forms part of the central protuberance. In the 70S ribosome it contacts protein S13 of the 30S subunit (bridge B1b), connecting the 2 subunits; this bridge is implicated in subunit movement. Contacts the P site tRNA; the 5S rRNA and some of its associated proteins might help stabilize positioning of ribosome-bound tRNAs. The sequence is that of Large ribosomal subunit protein uL5 from Staphylococcus epidermidis (strain ATCC 35984 / DSM 28319 / BCRC 17069 / CCUG 31568 / BM 3577 / RP62A).